The following is a 98-amino-acid chain: NADH-ubiquinone oxidoreductase chain 4L (98 aa).

The next 3 helical transmembrane spans lie at methionine 1 to isoleucine 21, serine 29 to leucine 49, and isoleucine 61 to valine 81.

Belongs to the complex I subunit 4L family. As to quaternary structure, core subunit of respiratory chain NADH dehydrogenase (Complex I) which is composed of 45 different subunits.

Its subcellular location is the mitochondrion inner membrane. It carries out the reaction a ubiquinone + NADH + 5 H(+)(in) = a ubiquinol + NAD(+) + 4 H(+)(out). Its function is as follows. Core subunit of the mitochondrial membrane respiratory chain NADH dehydrogenase (Complex I) which catalyzes electron transfer from NADH through the respiratory chain, using ubiquinone as an electron acceptor. Part of the enzyme membrane arm which is embedded in the lipid bilayer and involved in proton translocation. The sequence is that of NADH-ubiquinone oxidoreductase chain 4L (MT-ND4L) from Ursus americanus (American black bear).